The chain runs to 93 residues: Pyrimidine/purine nucleoside phosphorylase (93 aa).

The protein belongs to the nucleoside phosphorylase PpnP family.

The catalysed reaction is a purine D-ribonucleoside + phosphate = a purine nucleobase + alpha-D-ribose 1-phosphate. It catalyses the reaction adenosine + phosphate = alpha-D-ribose 1-phosphate + adenine. It carries out the reaction cytidine + phosphate = cytosine + alpha-D-ribose 1-phosphate. The enzyme catalyses guanosine + phosphate = alpha-D-ribose 1-phosphate + guanine. The catalysed reaction is inosine + phosphate = alpha-D-ribose 1-phosphate + hypoxanthine. It catalyses the reaction thymidine + phosphate = 2-deoxy-alpha-D-ribose 1-phosphate + thymine. It carries out the reaction uridine + phosphate = alpha-D-ribose 1-phosphate + uracil. The enzyme catalyses xanthosine + phosphate = alpha-D-ribose 1-phosphate + xanthine. Functionally, catalyzes the phosphorolysis of diverse nucleosides, yielding D-ribose 1-phosphate and the respective free bases. Can use uridine, adenosine, guanosine, cytidine, thymidine, inosine and xanthosine as substrates. Also catalyzes the reverse reactions. The polypeptide is Pyrimidine/purine nucleoside phosphorylase (Photobacterium profundum (strain SS9)).